Consider the following 189-residue polypeptide: dCTP deaminase (189 aa).

DCTP is bound by residues 112 to 117, 136 to 138, Gln-157, Tyr-171, and Gln-181; these read KSTYAR and TLE. Catalysis depends on Glu-138, which acts as the Proton donor/acceptor.

It belongs to the dCTP deaminase family. As to quaternary structure, homotrimer.

The catalysed reaction is dCTP + H2O + H(+) = dUTP + NH4(+). It participates in pyrimidine metabolism; dUMP biosynthesis; dUMP from dCTP (dUTP route): step 1/2. Functionally, catalyzes the deamination of dCTP to dUTP. The polypeptide is dCTP deaminase (Alcanivorax borkumensis (strain ATCC 700651 / DSM 11573 / NCIMB 13689 / SK2)).